Here is a 65-residue protein sequence, read N- to C-terminus: EHGYLLDKYTGCKVWCVINNESCNGECNKRRGGYYGYCYFWKLACYCQGARKSELWNYKTNKCKS.

A Pyrrolidone carboxylic acid (Glu); partial modification is found at E1. The LCN-type CS-alpha/beta domain occupies 1-64 (EHGYLLDKYT…LWNYKTNKCK (64 aa)). 4 cysteine pairs are disulfide-bonded: C12–C63, C16–C38, C23–C45, and C27–C47. S65 carries the serine amide modification.

It belongs to the long (4 C-C) scorpion toxin superfamily. Sodium channel inhibitor family. In terms of tissue distribution, expressed by the venom gland.

It localises to the secreted. Has a toxic effect on insects and mammals. On German cockroach larvae, it provokes contraction, paralysis and lethality. Intracerebroventricular injection into mice causes severe neurotoxic symptoms. It fully competes with the binding of the iodinated Css4 (AC P60266) on rat brain synaptosomes, with moderate affinity and in a concentration-dependent manner (EC(50)=25 nM). It may act on both site 3 and site 4 of voltage-gated sodium channels. The polypeptide is Beta-toxin Am IT (Androctonus mauritanicus mauritanicus (Scorpion)).